Reading from the N-terminus, the 115-residue chain is Holo-[acyl-carrier-protein] synthase (115 aa).

The Mg(2+) site is built by Asp-8 and Glu-50.

The protein belongs to the P-Pant transferase superfamily. AcpS family. Requires Mg(2+) as cofactor.

The protein resides in the cytoplasm. The enzyme catalyses apo-[ACP] + CoA = holo-[ACP] + adenosine 3',5'-bisphosphate + H(+). Functionally, transfers the 4'-phosphopantetheine moiety from coenzyme A to a Ser of acyl-carrier-protein. The protein is Holo-[acyl-carrier-protein] synthase of Renibacterium salmoninarum (strain ATCC 33209 / DSM 20767 / JCM 11484 / NBRC 15589 / NCIMB 2235).